We begin with the raw amino-acid sequence, 172 residues long: MNLLDYLPGVPDFPKPGVLFRDISPLLANPIAFKEAIHQLNEVAKQFDYTHILGIESRGFIFGSALAHFAHKGLALARKPNKLPLATHREAYGLEYGIDSLEIQQSTLPNDAKILLLDDVLATDGTLIAADKLIRSAGFEVIGAITLLEIGFLNGKQLLEQNGIRHQSVLKS.

It belongs to the purine/pyrimidine phosphoribosyltransferase family. As to quaternary structure, homodimer.

It is found in the cytoplasm. The enzyme catalyses AMP + diphosphate = 5-phospho-alpha-D-ribose 1-diphosphate + adenine. Its pathway is purine metabolism; AMP biosynthesis via salvage pathway; AMP from adenine: step 1/1. Functionally, catalyzes a salvage reaction resulting in the formation of AMP, that is energically less costly than de novo synthesis. In Polynucleobacter necessarius subsp. necessarius (strain STIR1), this protein is Adenine phosphoribosyltransferase.